A 590-amino-acid polypeptide reads, in one-letter code: Complement component C8 beta chain (590 aa).

Positions 1–32 (MKKSWTWTWRVPAELLLLCAALGCLCVPGSRS) are cleaved as a signal peptide. A propeptide spanning residues 33 to 54 (ERPRSLEPTVVNRSLAKSRHSR) is cleaved from the precursor. Asn44 is a glycosylation site (N-linked (GlcNAc...) asparagine). Residues 64 to 117 (DCELSSWSSWTMCDPCQKKRYRHAYLLRPSQFNGEPCNFSDKEVEDCATSRPCR) enclose the TSP type-1 1 domain. 7 disulfide bridges follow: Cys65-Cys100, Cys76-Cys110, Cys79-Cys116, Cys122-Cys133, Cys127-Cys146, Cys140-Cys155, and Cys162-Cys200. Trp70 and Trp73 each carry a C-linked (Man) tryptophan glycan. Asn101 carries N-linked (GlcNAc...) asparagine glycosylation. The LDL-receptor class A domain occupies 120–157 (VRCEGFVCAQTGRCVNRRLLCNGDNDCGDQSDEANCRK). Ca(2+)-binding residues include Leu138, Asn141, Asp143, Asp145, Asp151, and Glu152. The MACPF domain maps to 158–504 (IYKKCHHEME…EFQGEVSPCR (347 aa)). Transmembrane regions (beta stranded) follow at residues 252–259 (STFNLGFK), 262–269 (SIFEFGIN), 379–386 (AKNDFKLG), and 392–399 (VYVSLGVS). A disulfide bridge links Cys378 with Cys403. Thr418 carries the post-translational modification Phosphothreonine. 4 disulfides stabilise this stretch: Cys503-Cys550, Cys505-Cys521, Cys508-Cys523, and Cys525-Cys534. An EGF-like domain is found at 505–535 (CAPCQGNGVPVQKGSRCDCICPVGFQGSACE). Positions 545-588 (DGRWSCWSRWSSCSGGQKTRRRQCNNPAPQDGGSPCSGPASETL) constitute a TSP type-1 2 domain. C-linked (Man) tryptophan glycosylation is found at Trp551 and Trp554. Cys557 and Cys590 are oxidised to a cystine. Positions 557 to 590 (CSGGQKTRRRQCNNPAPQDGGSPCSGPASETLAC) are disordered.

It belongs to the complement C6/C7/C8/C9 family. As to quaternary structure, heterotrimer of 3 chains: alpha (C8A), beta (C8B) and gamma (C8G); the alpha and gamma chains are disulfide bonded. Component of the membrane attack complex (MAC), composed of complement C5b, C6, C7, C8A, C8B, C8G and multiple copies of the pore-forming subunit C9. N-glycosylated; contains one or two bound glycans. Not O-glycosylated.

The protein resides in the secreted. Its subcellular location is the target cell membrane. Membrane attack complex (MAC) assembly is inhibited by CD59, thereby protecting self-cells from damage during complement activation. CD59 acts by binding to the beta-haipins of C8 (C8A and C8B), forming an intermolecular beta-sheet that prevents incorporation of the multiple copies of C9 required for complete formation of the osmolytic pore. MAC assembly is also inhibited by clusterin (CLU) chaperones that inhibit polymerization of C9. Functionally, component of the membrane attack complex (MAC), a multiprotein complex activated by the complement cascade, which inserts into a target cell membrane and forms a pore, leading to target cell membrane rupture and cell lysis. The MAC is initiated by proteolytic cleavage of C5 into complement C5b in response to the classical, alternative, lectin and GZMK complement pathways. The complement pathways consist in a cascade of proteins that leads to phagocytosis and breakdown of pathogens and signaling that strengthens the adaptive immune system. C8B, together with C8A and C8G, inserts into the target membrane, but does not form pores by itself. During MAC assembly, associates with C5b, C6 and C7 to form the C5b8 intermediate complex that inserts into the target membrane and traverses the bilayer increasing membrane rigidity. In Oryctolagus cuniculus (Rabbit), this protein is Complement component C8 beta chain (C8B).